A 435-amino-acid polypeptide reads, in one-letter code: Light-independent protochlorophyllide reductase subunit N (435 aa).

Residues cysteine 23, cysteine 48, and cysteine 108 each coordinate [4Fe-4S] cluster.

The protein belongs to the BchN/ChlN family. Protochlorophyllide reductase is composed of three subunits; ChlL, ChlN and ChlB. Forms a heterotetramer of two ChlB and two ChlN subunits. [4Fe-4S] cluster is required as a cofactor.

It is found in the plastid. The protein localises to the chloroplast. The enzyme catalyses chlorophyllide a + oxidized 2[4Fe-4S]-[ferredoxin] + 2 ADP + 2 phosphate = protochlorophyllide a + reduced 2[4Fe-4S]-[ferredoxin] + 2 ATP + 2 H2O. It participates in porphyrin-containing compound metabolism; chlorophyll biosynthesis (light-independent). Component of the dark-operative protochlorophyllide reductase (DPOR) that uses Mg-ATP and reduced ferredoxin to reduce ring D of protochlorophyllide (Pchlide) to form chlorophyllide a (Chlide). This reaction is light-independent. The NB-protein (ChlN-ChlB) is the catalytic component of the complex. The sequence is that of Light-independent protochlorophyllide reductase subunit N from Chlorella vulgaris (Green alga).